We begin with the raw amino-acid sequence, 33 residues long: RRICRCRIGRCLGLEVYFGVCFLHGRLARRCCR.

3 disulfides stabilise this stretch: C4–C32, C6–C21, and C11–C31.

Belongs to the alpha-defensin family.

Its subcellular location is the secreted. In terms of biological role, has antibacterial activity against the Gram-negative bacterium E.coli and the Gram-positive bacteria L.monocytogenes and S.aureus. Has antifungal activity against C.albicans. In Papio hamadryas (Hamadryas baboon), this protein is Defensin-1.